The following is a 98-amino-acid chain: NADH-ubiquinone oxidoreductase chain 4L (98 aa).

3 helical membrane-spanning segments follow: residues 1–21, 25–45, and 67–87; these read MSLV…GLLM, HLMS…ILST, and AACE…TYGV.

Belongs to the complex I subunit 4L family. As to quaternary structure, core subunit of respiratory chain NADH dehydrogenase (Complex I) which is composed of 45 different subunits.

Its subcellular location is the mitochondrion inner membrane. The catalysed reaction is a ubiquinone + NADH + 5 H(+)(in) = a ubiquinol + NAD(+) + 4 H(+)(out). In terms of biological role, core subunit of the mitochondrial membrane respiratory chain NADH dehydrogenase (Complex I) which catalyzes electron transfer from NADH through the respiratory chain, using ubiquinone as an electron acceptor. Part of the enzyme membrane arm which is embedded in the lipid bilayer and involved in proton translocation. In Talpa europaea (European mole), this protein is NADH-ubiquinone oxidoreductase chain 4L (MT-ND4L).